We begin with the raw amino-acid sequence, 196 residues long: FKBP-type peptidyl-prolyl cis-trans isomerase SlyD (196 aa).

The interval 1 to 69 is PPIase first part; the sequence is MKVAKDLVVS…VAVGANDAYG (69 aa). In terms of domain architecture, PPIase FKBP-type spans 1-95; that stretch reads MKVAKDLVVS…GVDELQVGMR (95 aa). Positions 76–120 are IF-chaperone; it reads VQRVPKDVFMGVDELQVGMRFLAETDQGPVPVEITAVEDDHVVVD. Residues 129–151 are PPIase second part; it reads NLKFNVEVVAIREATEEELAHGH. Cysteine 167, cysteine 168, cysteine 184, cysteine 185, cysteine 193, and cysteine 195 together coordinate Ni(2+).

Belongs to the FKBP-type PPIase family. In terms of assembly, monomer. Binds to a broad range of unrelated Tat signal sequences. Interacts with the hydrogenase nickel incorporation protein HypB.

It is found in the cytoplasm. It carries out the reaction [protein]-peptidylproline (omega=180) = [protein]-peptidylproline (omega=0). Functionally, folding helper with both chaperone and peptidyl-prolyl cis-trans isomerase (PPIase) activities. Chaperone activity prevents aggregation of unfolded or partially folded proteins and promotes their correct folding. PPIases catalyze the cis-trans isomerization of Xaa-Pro bonds of peptides, which accelerates slow steps of protein folding and thus shortens the lifetime of intermediates. Both strategies lower the concentration of intermediates and increase the productivity and yield of the folding reaction. SlyD could be involved in Tat-dependent translocation, by binding to the Tat-type signal of folded proteins. Also involved in hydrogenase metallocenter assembly, probably by participating in the nickel insertion step. This function in hydrogenase biosynthesis requires chaperone activity and the presence of the metal-binding domain, but not PPIase activity. The chain is FKBP-type peptidyl-prolyl cis-trans isomerase SlyD (slyD) from Escherichia coli O157:H7.